A 1271-amino-acid polypeptide reads, in one-letter code: Protein flightless-1 homolog (1271 aa).

At methionine 1 the chain carries N-acetylmethionine. Positions 1–427 (MEATGVLPFV…SGSKDPLARK (427 aa)) are interaction with LRRFIP1 and LRRFIP2. LRR repeat units lie at residues 7-32 (LPFV…VKAM), 33-55 (TSLR…LAAL), 56-78 (QKLE…LSSL), 80-103 (SLRA…IFKL), 104-126 (DDLS…LENA), 127-149 (KNML…LFIN), 150-173 (LTDL…MRRL), 175-196 (HLQT…QLPA), 197-222 (MMAL…LEGL), 223-245 (SNLS…LYTL), 247-268 (SLRR…IDQW), 269-291 (VHLE…ICKL), 293-316 (KLKK…IGKL), 317-339 (TSLE…LCRC), 340-363 (PKLK…HFLT), and 365-385 (IQVL…PADR). Lysine 21 is subject to N6-acetyllysine. Position 406 is a phosphoserine (serine 406). The residue at position 436 (serine 436) is a Phosphoserine; by SGK3. An interaction with ACTL6A region spans residues 495-827 (VGQLPGLTIW…VVSRSLEGTE (333 aa)). Gelsolin-like repeat units lie at residues 509–591 (FVPV…EEFL), 629–703 (NIKL…PGFW), and 759–831 (LMPG…AQVF). Phosphoserine is present on serine 860. The tract at residues 951-977 (KTEDKEGKASAEAREGEEAAAEAEEKQ) is disordered. A compositionally biased stretch (basic and acidic residues) spans 952–967 (TEDKEGKASAEAREGE). Residues 968–977 (EAAAEAEEKQ) are compositionally biased toward acidic residues. A Gelsolin-like 4 repeat occupies 1183 to 1256 (KCSDFCQDDL…VRKGNEQRAF (74 aa)).

Interacts with actin, ACTL6A and NCOA2. Interacts with CARM1. Interacts with LRRFIP1, LRRFIP2 and MYD88. Upon LPS stimulation, LRRFIP2 competes for MYD88-binding; LRRFIP1 constitutively blocks the interaction with MyD88, even in the absence of LPS. Interacts with the nuclear receptors ESR1 and THRB. Interacts with SGK3. Interacts (via the gelsolin-like region) with TMOD1 and TMOD3. Interacts with LMOD2, VCL, GSN and DES. Expressed in blastocyst.

The protein resides in the nucleus. Its subcellular location is the cytoplasm. It localises to the cytoskeleton. It is found in the microtubule organizing center. The protein localises to the centrosome. The protein resides in the cell junction. Its subcellular location is the focal adhesion. It localises to the cell projection. It is found in the podosome. Its function is as follows. Is a regulator of actin polymerization, required for proper myofibril organization and regulation of the length of sarcomeric thin filaments. It also plays a role in the assembly of cardiomyocyte cell adhesion complexes. Regulates cytoskeletal rearrangements involved in cytokinesis and cell migration, by inhibiting Rac1-dependent paxillin phosphorylation. May play a role as coactivator in transcriptional activation by hormone-activated nuclear receptors (NR) and acts in cooperation with NCOA2 and CARM1. Involved in estrogen hormone signaling. This is Protein flightless-1 homolog (Flii) from Mus musculus (Mouse).